A 129-amino-acid polypeptide reads, in one-letter code: Small ribosomal subunit protein uS11 (129 aa).

This sequence belongs to the universal ribosomal protein uS11 family. In terms of assembly, part of the 30S ribosomal subunit. Interacts with proteins S7 and S18. Binds to IF-3.

In terms of biological role, located on the platform of the 30S subunit, it bridges several disparate RNA helices of the 16S rRNA. Forms part of the Shine-Dalgarno cleft in the 70S ribosome. The protein is Small ribosomal subunit protein uS11 of Azotobacter vinelandii (strain DJ / ATCC BAA-1303).